Here is a 332-residue protein sequence, read N- to C-terminus: 6-phosphogluconolactonase (332 aa).

This sequence belongs to the cycloisomerase 2 family.

It carries out the reaction 6-phospho-D-glucono-1,5-lactone + H2O = 6-phospho-D-gluconate + H(+). It functions in the pathway carbohydrate degradation; pentose phosphate pathway; D-ribulose 5-phosphate from D-glucose 6-phosphate (oxidative stage): step 2/3. Functionally, catalyzes the hydrolysis of 6-phosphogluconolactone to 6-phosphogluconate. This is 6-phosphogluconolactonase from Pectobacterium atrosepticum (strain SCRI 1043 / ATCC BAA-672) (Erwinia carotovora subsp. atroseptica).